Consider the following 179-residue polypeptide: NADH-quinone oxidoreductase subunit B 1 (179 aa).

Positions 38, 39, 104, and 133 each coordinate [4Fe-4S] cluster.

It belongs to the complex I 20 kDa subunit family. In terms of assembly, NDH-1 is composed of 14 different subunits. Subunits NuoB, C, D, E, F, and G constitute the peripheral sector of the complex. It depends on [4Fe-4S] cluster as a cofactor.

The protein localises to the cell membrane. The enzyme catalyses a quinone + NADH + 5 H(+)(in) = a quinol + NAD(+) + 4 H(+)(out). In terms of biological role, NDH-1 shuttles electrons from NADH, via FMN and iron-sulfur (Fe-S) centers, to quinones in the respiratory chain. The immediate electron acceptor for the enzyme in this species is believed to be ubiquinone. Couples the redox reaction to proton translocation (for every two electrons transferred, four hydrogen ions are translocated across the cytoplasmic membrane), and thus conserves the redox energy in a proton gradient. This is NADH-quinone oxidoreductase subunit B 1 from Herpetosiphon aurantiacus (strain ATCC 23779 / DSM 785 / 114-95).